The sequence spans 227 residues: AN1-type zinc finger protein 3 (227 aa).

Residues 12-44 form an A20-type zinc finger; it reads PSLPPRCPCGFWGSSKTMNLCSKCFADFQKKQP. Zn(2+)-binding residues include Cys18, Cys20, Cys32, and Cys35. The segment at 41-151 is disordered; it reads KKQPDDDSTP…RPEESGRSKQ (111 aa). 2 stretches are compositionally biased toward low complexity: residues 49-59 and 66-77; these read TPSTSNSQSDL and SDNNNTSVTTPT. Composition is skewed to polar residues over residues 78 to 94 and 111 to 127; these read LSPSQQSLPTELNVTSP and ITPTKRSCGADSQSESE. The segment covering 135–148 has biased composition (basic and acidic residues); the sequence is RLVENPERPEESGR. The segment at 151 to 200 adopts an AN1-type zinc-finger fold; the sequence is QKSRRRCFQCQTKLELVQQELGSCRCGYVFCMLHRLPEQHDCTFDHMGRG. Zn(2+)-binding residues include Cys157, Cys160, Cys174, Cys176, Cys181, His184, His190, and Cys192.

The chain is AN1-type zinc finger protein 3 (Zfand3) from Rattus norvegicus (Rat).